Here is a 512-residue protein sequence, read N- to C-terminus: Ankyrin repeat domain-containing protein SOWAHC (512 aa).

A phosphoserine mark is found at Ser82 and Ser125. The interval 126-248 (LGLGGEVSDQ…AEEESSVGAS (123 aa)) is disordered. Residues 173 to 186 (PPQGEAEGGSSPSG) show a composition bias toward low complexity. Ser205 carries the post-translational modification Phosphoserine. A compositionally biased stretch (gly residues) spans 214 to 228 (PGDGNAGGRSRGGGD). Low complexity predominate over residues 229–248 (SDTASLASSSAEEESSVGAS). ANK repeat units lie at residues 288–317 (TGFT…KHQL) and 327–357 (GGYT…DVDI). Arg395 carries the omega-N-methylarginine modification. A disordered region spans residues 427-500 (HVPEGWTGGS…EERSLRGYSS (74 aa)). Over residues 453-462 (MKPRLNKIRF) the composition is skewed to basic residues. Acidic residues predominate over residues 481-492 (EEGEEEEEEEEE).

This sequence belongs to the SOWAH family.

This chain is Ankyrin repeat domain-containing protein SOWAHC (Sowahc), found in Mus musculus (Mouse).